Reading from the N-terminus, the 302-residue chain is TATA-box-binding protein (302 aa).

2 disordered regions span residues 1-22 (MEQN…GAMT) and 50-81 (SLLE…QTPQ). Residues 50–70 (SLLEEQQRQQQQQQAASQQQG) are compositionally biased toward low complexity. A run of 2 repeats spans residues 128-204 (LQNI…ARVV) and 218-295 (IQNM…YPIL).

This sequence belongs to the TBP family. In terms of tissue distribution, enriched in testis but hardly detectable in the ovary (at protein level).

Its subcellular location is the nucleus. General transcription factor that functions at the core of the DNA-binding multiprotein factor TFIID. Binding of TFIID to the TATA box is the initial transcriptional step of the pre-initiation complex (PIC), playing a role in the activation of eukaryotic genes transcribed by RNA polymerase II. Members of the TBP family are differentially required for transcription and development during early embryogenesis. Regulates mRNA levels in the early embryo by both transcriptional and post-transcriptional mechanisms. Required for transcription of a subset of genes at the mid-blastula transition (MBT). Negatively regulates the expression of other embryonic genes, including autoregulation of the tbp promoter itself. Also functions within a transcription-dependent mechanism to direct the temporally-regulated degradation of a subset of maternal mRNAs after the MBT. This is part of a general mechanism to regulate the maternal to zygotic transition and is required for normal embryonic development. Binds to promoters of a subset of genes. Required for gastrulation. This chain is TATA-box-binding protein, found in Danio rerio (Zebrafish).